A 1032-amino-acid polypeptide reads, in one-letter code: Vacuolar membrane protease (1032 aa).

The Cytoplasmic portion of the chain corresponds to 1–11; the sequence is MRFQNPFAFRP. A helical membrane pass occupies residues 12-32; it reads GPVSFWTTVIYLALVIPLIYV. Residues 33–426 lie on the Vacuolar side of the membrane; sequence HETVPPAPSD…AWAVFALRGL (394 aa). N-linked (GlcNAc...) asparagine glycans are attached at residues asparagine 50 and asparagine 142. Positions 207 and 219 each coordinate Zn(2+). Catalysis depends on glutamate 253, which acts as the Proton acceptor. Residues glutamate 254, glutamate 279, and histidine 352 each coordinate Zn(2+). The chain crosses the membrane as a helical span at residues 427-447; the sequence is FAWSLTLLVATPLILVAITYI. At 448-482 the chain is on the cytoplasmic side; the sequence is LARKDKYYFFSRDIKMHHDINDDPVVLGGWKGFLR. A helical transmembrane segment spans residues 483–503; it reads FPFALVFAGALTIASTLLLAK. At 504–511 the chain is on the vacuolar side; it reads FNPLIIYS. A helical membrane pass occupies residues 512–532; that stretch reads SPYAVWSMTLSIFYFSFWLIM. Residues 533 to 545 lie on the Cytoplasmic side of the membrane; that stretch reads RGASFIRPSALHR. Residues 546–566 form a helical membrane-spanning segment; it reads GYVLIWLFALGWGLQVVGAVA. Residues 567–573 lie on the Vacuolar side of the membrane; sequence EDRLHIA. A helical transmembrane segment spans residues 574–594; that stretch reads ALYATVFLQSAVFLALFISLL. Residues 595–708 lie on the Cytoplasmic side of the membrane; it reads EQFALLGKHD…WSGRLPSWTW (114 aa). A compositionally biased stretch (basic and acidic residues) spans 616-631; that stretch reads RDISSHGTDHESRPQP. A disordered region spans residues 616–666; that stretch reads RDISSHGTDHESRPQPEEEPAQPEGDEDESEDATETTPLRANEPGYGSSTR. The span at 632–649 shows a compositional bias: acidic residues; the sequence is EEEPAQPEGDEDESEDAT. Residues 709–729 traverse the membrane as a helical segment; it reads IIQFLLLAPVPVILFGNLGLV. Topologically, residues 730 to 745 are vacuolar; that stretch reads AMSALQMTGTDGGSLL. Residues 746 to 766 form a helical membrane-spanning segment; that stretch reads VPVLTLGIVSIFLLLPLTPFI. Residues 767–773 lie on the Cytoplasmic side of the membrane; sequence HRVSHHV. A helical membrane pass occupies residues 774-794; sequence PMFLLCVFAGTFIYNLVAFPF. The Vacuolar segment spans residues 795–1032; it reads SDSHRFKFYF…LVEVRKTYKV (238 aa). Residues asparagine 812 and asparagine 884 are each glycosylated (N-linked (GlcNAc...) asparagine).

This sequence belongs to the peptidase M28 family. Requires Zn(2+) as cofactor.

Its subcellular location is the vacuole membrane. In terms of biological role, may be involved in vacuolar sorting and osmoregulation. The sequence is that of Vacuolar membrane protease from Fusarium vanettenii (strain ATCC MYA-4622 / CBS 123669 / FGSC 9596 / NRRL 45880 / 77-13-4) (Fusarium solani subsp. pisi).